We begin with the raw amino-acid sequence, 381 residues long: Glycerate 2-kinase (381 aa).

It belongs to the glycerate kinase type-1 family.

It catalyses the reaction (R)-glycerate + ATP = (2R)-2-phosphoglycerate + ADP + H(+). Its function is as follows. Catalyzes the transfer of the phosphate group from adenosine triphosphate (ATP) to (R)-glycerate to form (2R)-2-phosphoglycerate, an enzymatic step in (L)-glucarate/galactarate catabolic pathway. The chain is Glycerate 2-kinase (garK) from Escherichia coli (strain K12).